The sequence spans 348 residues: RNA 3'-terminal phosphate cyclase (348 aa).

ATP-binding positions include Gln107 and 290 to 294; that span reads HLADQ. Residue His316 is the Tele-AMP-histidine intermediate of the active site.

It belongs to the RNA 3'-terminal cyclase family. Type 1 subfamily.

It localises to the cytoplasm. It carries out the reaction a 3'-end 3'-phospho-ribonucleotide-RNA + ATP = a 3'-end 2',3'-cyclophospho-ribonucleotide-RNA + AMP + diphosphate. Functionally, catalyzes the conversion of 3'-phosphate to a 2',3'-cyclic phosphodiester at the end of RNA. The mechanism of action of the enzyme occurs in 3 steps: (A) adenylation of the enzyme by ATP; (B) transfer of adenylate to an RNA-N3'P to produce RNA-N3'PP5'A; (C) and attack of the adjacent 2'-hydroxyl on the 3'-phosphorus in the diester linkage to produce the cyclic end product. The biological role of this enzyme is unknown but it is likely to function in some aspects of cellular RNA processing. The chain is RNA 3'-terminal phosphate cyclase from Trichormus variabilis (strain ATCC 29413 / PCC 7937) (Anabaena variabilis).